Consider the following 665-residue polypeptide: Chaperone protein dnaK1 (665 aa).

Thr-198 is modified (phosphothreonine; by autocatalysis). The disordered stretch occupies residues 634 to 665 (DDPWDNQMNSNSRNSRYGNSRDDDPWDNDYFL). Low complexity predominate over residues 642–651 (NSNSRNSRYG).

Belongs to the heat shock protein 70 family.

In terms of biological role, acts as a chaperone. This is Chaperone protein dnaK1 (dnaK1) from Prochlorococcus marinus subsp. pastoris (strain CCMP1986 / NIES-2087 / MED4).